The chain runs to 554 residues: MGHKKNGHRRQIKERENQNKFERSTYTNNAKNNHTQTKDKKLRAGLKKIDEQYKKAVSSAAATDYLLPESNGYLEPENELEKTFKVQQSEIKSSVDVSTANKALDLSLKEFGPYHIKYAKNGTHLLITGRKGHVASMDWRKGQLRAELFLNETCHSATYLQNEQYFAVAQKKYTFIYDHEGTELHRLKQHIEARHLDFLPYHYLLVTAGETGWLKYHDVSTGQLVSELRTKAGPTMAMAQNPWNAVMHLGHSNGTVSLWSPSMPEPLVKLLSARGPVNSIAIDRSGYYMATTGADRSMKIWDIRNFKQLHSVESLPTPGTNVSISDTGLLALSRGPHVTLWKDALKLSGDSKPCFGSMGGNPHRNTPYMSHLFAGNKVENLGFVPFEDLLGVGHQTGITNLIVPGAGEANYDALELNPFETKKQRQEQEVRTLLNKLPADTITLDPNSIGSVDKRSSTIRLNAKDLAQTTMDANNKAKTNSDIPDVKPDVKGKNSGLRSFLRKKTQNVIDERKLRVQKQLDKEKNIRKRNHQIKQGLISEDHKDVIEEALSRFG.

Residues 1-12 show a composition bias toward basic residues; sequence MGHKKNGHRRQI. A disordered region spans residues 1 to 39; that stretch reads MGHKKNGHRRQIKERENQNKFERSTYTNNAKNNHTQTKD. A compositionally biased stretch (basic and acidic residues) spans 13–23; the sequence is KERENQNKFER. The segment covering 24–35 has biased composition (polar residues); sequence STYTNNAKNNHT. WD repeat units lie at residues 108 to 149, 230 to 269, 272 to 311, and 314 to 351; these read LKEF…AELF, TKAGPTMAMAQNPWNAVMHLGHSNGTVSLWSPSMPEPLVK, SARGPVNSIAIDRSGYYMATTGADRSMKIWDIRNFKQLHS, and SLPTPGTNVSISDTGLLALSRGPHVTLWKDALKLSGDS. The segment at 475-496 is disordered; the sequence is NKAKTNSDIPDVKPDVKGKNSG.

Interacts with snoRNA U3. Interacts with MPP10. Component of the ribosomal small subunit (SSU) processome composed of at least 40 protein subunits and snoRNA U3.

It localises to the nucleus. The protein resides in the nucleolus. Involved in nucleolar processing of pre-18S ribosomal RNA. In Saccharomyces cerevisiae (strain ATCC 204508 / S288c) (Baker's yeast), this protein is U3 small nucleolar RNA-associated protein 7 (UTP7).